Reading from the N-terminus, the 410-residue chain is Acetate kinase (410 aa).

Mg(2+) is bound at residue Asn-7. Lys-14 lines the ATP pocket. Arg-88 is a substrate binding site. Asp-145 (proton donor/acceptor) is an active-site residue. Residues 203–207, 278–280, and 326–330 each bind ATP; these read HAGNG, DTR, and GIGEN. Mg(2+) is bound at residue Glu-379.

This sequence belongs to the acetokinase family. Homodimer. Mg(2+) is required as a cofactor. Mn(2+) serves as cofactor.

Its subcellular location is the cytoplasm. It carries out the reaction acetate + ATP = acetyl phosphate + ADP. It participates in metabolic intermediate biosynthesis; acetyl-CoA biosynthesis; acetyl-CoA from acetate: step 1/2. Catalyzes the formation of acetyl phosphate from acetate and ATP. Can also catalyze the reverse reaction. The polypeptide is Acetate kinase (Chlorante-Aster yellows phytoplasma).